A 211-amino-acid polypeptide reads, in one-letter code: MNNEPTKIPQATAKRLPLYYRFLENLHASGKQRVSSSELSEAVKVDSATIRRDFSYFGALGKKGYGYNVNYLLTFFRKTLHQDELTKVMLIGVGNLGTALLNYNFSKNNHTQIVMAFDVDREKIGNTVSGVKIENLDNLENKITSDVSVAILTVPAAVAQKTADRLVNAGVKGILNFTPARIAVPEHVRVHHIDLSVELQALIYFLKHYPL.

The segment at residues 18–57 is a DNA-binding region (H-T-H motif); sequence LYYRFLENLHASGKQRVSSSELSEAVKVDSATIRRDFSYF. 92-97 is a binding site for NAD(+); it reads GVGNLG.

Belongs to the transcriptional regulatory Rex family. In terms of assembly, homodimer.

It localises to the cytoplasm. In terms of biological role, modulates transcription in response to changes in cellular NADH/NAD(+) redox state. This Halalkalibacterium halodurans (strain ATCC BAA-125 / DSM 18197 / FERM 7344 / JCM 9153 / C-125) (Bacillus halodurans) protein is Redox-sensing transcriptional repressor Rex.